A 385-amino-acid chain; its full sequence is Prostacyclin receptor (385 aa).

At 1–16 (MADSCRNLTYVRDSVG) the chain is on the extracellular side. Disulfide bonds link cysteine 5–cysteine 165 and cysteine 92–cysteine 170. Asparagine 7 is a glycosylation site (N-linked (GlcNAc...) asparagine). Residues 17-38 (PATSTLMFVAGVVGNGLALGIL) traverse the membrane as a helical segment. Residues 39-51 (GARRHSRPSAFAV) are Cytoplasmic-facing. The helical transmembrane segment at 52–76 (LVTGLGVTDLLGTCFLSPAVFAAYA) threads the bilayer. Over 77 to 94 (RNSSLLGLARGRPALCDA) the chain is Extracellular. A helical transmembrane segment spans residues 95 to 115 (FAFAMTFFGLASTLILFAMAV). Residues 116–134 (ERCLALSHPYLYAQLDGPR) are Cytoplasmic-facing. A helical membrane pass occupies residues 135 to 158 (RARLALPAIYAFCTIFCSLPFLGL). Residues 159-181 (GQHQQYCPGSWCFIRMRSAEPGG) lie on the Extracellular side of the membrane. Residues 182–208 (CAFLLAYASLVALLVAAIVLCNGSVTL) traverse the membrane as a helical segment. Residues 209-234 (SLCRMYRQQRRHQARCPRPRAGEDEV) are Cytoplasmic-facing. The chain crosses the membrane as a helical span at residues 235 to 259 (DHLILLALMTGIMAVCSLPLTPQIR). The Extracellular segment spans residues 260–273 (GFTQAIAPDSSEMG). The chain crosses the membrane as a helical span at residues 274–294 (DLLAFRFNAFNPILDPWVFIL). The Cytoplasmic portion of the chain corresponds to 295–385 (FRKSVFQRLK…AGSEAACSLC (91 aa)). The tract at residues 315–344 (AQGDSRTSLSQSASGRKDSSAPPALEGKKG) is disordered. The segment covering 318 to 328 (DSRTSLSQSAS) has biased composition (polar residues). Cysteine 382 is subject to Cysteine methyl ester. The S-farnesyl cysteine moiety is linked to residue cysteine 382. A propeptide spans 383-385 (SLC) (removed in mature form).

Belongs to the G-protein coupled receptor 1 family. In terms of assembly, interacts (non-isoprenylated C-terminus) with PDZK1. Post-translationally, isoprenylation does not influence ligand binding but is required for efficient coupling to the effectors adenylyl cyclase and phospholipase C.

It localises to the cell membrane. Receptor for prostacyclin (prostaglandin I2 or PGI2). The activity of this receptor is mediated by G(s) proteins which activate adenylate cyclase. This Bos taurus (Bovine) protein is Prostacyclin receptor (PTGIR).